We begin with the raw amino-acid sequence, 204 residues long: Elongation factor Ts (204 aa).

An involved in Mg(2+) ion dislocation from EF-Tu region spans residues 80-83 (TDFV).

This sequence belongs to the EF-Ts family.

It localises to the cytoplasm. Associates with the EF-Tu.GDP complex and induces the exchange of GDP to GTP. It remains bound to the aminoacyl-tRNA.EF-Tu.GTP complex up to the GTP hydrolysis stage on the ribosome. The chain is Elongation factor Ts from Caldicellulosiruptor bescii (strain ATCC BAA-1888 / DSM 6725 / KCTC 15123 / Z-1320) (Anaerocellum thermophilum).